The following is a 108-amino-acid chain: NADH dehydrogenase [ubiquinone] flavoprotein 3, mitochondrial (108 aa).

The transit peptide at Met-1–Leu-34 directs the protein to the mitochondrion. The disordered stretch occupies residues Ser-33–Lys-72. Ser-105 bears the Phosphoserine mark.

The protein belongs to the complex I NDUFV3 subunit family. Complex I is composed of 45 different subunits. This is a component of the flavoprotein-sulfur (FP) fragment of the enzyme.

The protein resides in the mitochondrion inner membrane. Its function is as follows. Accessory subunit of the mitochondrial membrane respiratory chain NADH dehydrogenase (Complex I), that is believed not to be involved in catalysis. Complex I functions in the transfer of electrons from NADH to the respiratory chain. The immediate electron acceptor for the enzyme is believed to be ubiquinone. May be the terminally assembled subunit of Complex I. The polypeptide is NADH dehydrogenase [ubiquinone] flavoprotein 3, mitochondrial (NDUFV3) (Homo sapiens (Human)).